Reading from the N-terminus, the 303-residue chain is HTH-type transcriptional regulator LysG (303 aa).

The HTH lysR-type domain occupies 6–62; it reads LDGPQLAALAAVVELGSFDAAAERLHVTPSAVSQRIKSLEQQVGQVLVVREKPCRAT. The segment at residues 23–42 is a DNA-binding region (H-T-H motif); that stretch reads FDAAAERLHVTPSAVSQRIK.

It belongs to the LysR transcriptional regulatory family. In terms of assembly, homodimer.

Functionally, positively regulates the expression of the exporter LysE and represses its own expression. The chain is HTH-type transcriptional regulator LysG from Mycobacterium bovis (strain ATCC BAA-935 / AF2122/97).